A 336-amino-acid chain; its full sequence is NADH-quinone oxidoreductase subunit H (336 aa).

Helical transmembrane passes span 4–24 (YILWTSLYVLLIVIPLILVVA), 75–95 (YLFFIAPILAFAPAYAAWAVI), 108–128 (LGLLYILAMTSFSIYGIVIAG), 154–174 (MGFAIVGVVIAAGSMGITGII), 181–201 (IWHWYFISLFPLFIVYFIAGI), 233–253 (LFFLAEYANMILISILTSIMF), 272–292 (FVPGVVWLFAKTGIFMFMFLW), and 308–328 (LGWKIFIPLTFVWVVIVACMV).

The protein belongs to the complex I subunit 1 family. In terms of assembly, NDH-1 is composed of 14 different subunits. Subunits NuoA, H, J, K, L, M, N constitute the membrane sector of the complex.

The protein localises to the cell inner membrane. It catalyses the reaction a quinone + NADH + 5 H(+)(in) = a quinol + NAD(+) + 4 H(+)(out). NDH-1 shuttles electrons from NADH, via FMN and iron-sulfur (Fe-S) centers, to quinones in the respiratory chain. The immediate electron acceptor for the enzyme in this species is believed to be ubiquinone. Couples the redox reaction to proton translocation (for every two electrons transferred, four hydrogen ions are translocated across the cytoplasmic membrane), and thus conserves the redox energy in a proton gradient. This subunit may bind ubiquinone. The sequence is that of NADH-quinone oxidoreductase subunit H from Francisella tularensis subsp. mediasiatica (strain FSC147).